Consider the following 177-residue polypeptide: Transcription factor E (177 aa).

An HTH TFE/IIEalpha-type domain is found at 9–91; that stretch reads VEELLNELVG…YWRINYDKAL (83 aa).

This sequence belongs to the TFE family. In terms of assembly, monomer. Interaction with RNA polymerase subunits RpoF and RpoE is necessary for Tfe stimulatory transcription activity. Able to interact with Tbp and RNA polymerase in the absence of DNA promoter. Interacts both with the preinitiation and elongation complexes.

Transcription factor that plays a role in the activation of archaeal genes transcribed by RNA polymerase. Facilitates transcription initiation by enhancing TATA-box recognition by TATA-box-binding protein (Tbp), and transcription factor B (Tfb) and RNA polymerase recruitment. Not absolutely required for transcription in vitro, but particularly important in cases where Tbp or Tfb function is not optimal. It dynamically alters the nucleic acid-binding properties of RNA polymerases by stabilizing the initiation complex and destabilizing elongation complexes. Seems to translocate with the RNA polymerase following initiation and acts by binding to the non template strand of the transcription bubble in elongation complexes. The polypeptide is Transcription factor E (Archaeoglobus fulgidus (strain ATCC 49558 / DSM 4304 / JCM 9628 / NBRC 100126 / VC-16)).